Here is a 304-residue protein sequence, read N- to C-terminus: Murein tetrapeptide carboxypeptidase (304 aa).

Catalysis depends on serine 106, which acts as the Nucleophile. Residues glutamate 200 and histidine 270 each act as charge relay system in the active site.

Belongs to the peptidase S66 family.

Its subcellular location is the cytoplasm. It carries out the reaction N-acetyl-D-glucosaminyl-N-acetylmuramoyl-L-alanyl-meso-2,6-diaminoheptanedioyl-D-alanine + H2O = N-acetyl-D-glucosaminyl-N-acetylmuramoyl-L-alanyl-meso-2,6-diaminoheptanedioate + D-alanine. The protein operates within cell wall biogenesis; peptidoglycan recycling. Functionally, releases the terminal D-alanine residue from the cytoplasmic tetrapeptide recycling product L-Ala-gamma-D-Glu-meso-Dap-D-Ala. Can also cleave D-Ala from murein derivatives containing the tetrapeptide, i.e. MurNAc-tetrapeptide, UDP-MurNAc-tetrapeptide, GlcNAc-MurNAc-tetrapeptide, and GlcNAc-anhMurNAc-tetrapeptide. Does not act on murein sacculi or cross-linked muropeptides. The tripeptides produced by the LcdA reaction can then be reused as peptidoglycan building blocks; LcdA is thereby involved in murein recycling. The polypeptide is Murein tetrapeptide carboxypeptidase (ldcA) (Escherichia coli O157:H7).